A 1110-amino-acid polypeptide reads, in one-letter code: Isoleucine--tRNA ligase (1110 aa).

The 'HIGH' region signature appears at 47 to 57 (PSANGTPGIHH). Residues 658-662 (KMSKR) carry the 'KMSKS' region motif. Position 661 (Lys661) interacts with ATP.

The protein belongs to the class-I aminoacyl-tRNA synthetase family. IleS type 2 subfamily. In terms of assembly, monomer. Zn(2+) is required as a cofactor.

Its subcellular location is the cytoplasm. The enzyme catalyses tRNA(Ile) + L-isoleucine + ATP = L-isoleucyl-tRNA(Ile) + AMP + diphosphate. Functionally, catalyzes the attachment of isoleucine to tRNA(Ile). As IleRS can inadvertently accommodate and process structurally similar amino acids such as valine, to avoid such errors it has two additional distinct tRNA(Ile)-dependent editing activities. One activity is designated as 'pretransfer' editing and involves the hydrolysis of activated Val-AMP. The other activity is designated 'posttransfer' editing and involves deacylation of mischarged Val-tRNA(Ile). The polypeptide is Isoleucine--tRNA ligase (Cytophaga hutchinsonii (strain ATCC 33406 / DSM 1761 / CIP 103989 / NBRC 15051 / NCIMB 9469 / D465)).